A 360-amino-acid polypeptide reads, in one-letter code: Vignain (360 aa).

The N-terminal stretch at 1-20 (MQKFILLALSLALVLAITES) is a signal peptide. A propeptide spans 21-124 (FDFHEKELES…NGTFMYEKVD (104 aa)) (activation peptide). The N-linked (GlcNAc...) asparagine glycan is linked to Asn-115. 3 disulfide bridges follow: Cys-147-Cys-189, Cys-181-Cys-222, and Cys-280-Cys-332. Cys-150 is a catalytic residue. Residues His-286 and Asn-307 contribute to the active site. The interval 341 to 360 (PIKKSSNNPSGIKSSPKDEL) is disordered. Positions 344–353 (KSSNNPSGIK) are enriched in polar residues. A propeptide spans 354–360 (SSPKDEL) (removed in mature form). The segment at 357–360 (KDEL) is prevents secretion from ER.

The protein belongs to the peptidase C1 family. In terms of processing, the potential N-glycosylation site at Asn-115 is not glycosylated.

It is found in the cytoplasmic vesicle. Its activity is regulated as follows. Low pH triggers activation of the protease and removal of the propeptide and the KDEL motif. Involved in programmed cell death. Shows a pronounced preference for hydrophobic residues in the P2 position and no obvious preference in the P1 position of the cleavage site. Accepts proline at the P1 and P1' positions. This Ricinus communis (Castor bean) protein is Vignain (CYSEP).